The sequence spans 671 residues: DNA ligase (671 aa).

NAD(+) is bound by residues 32-36 (DAEYD), 81-82 (SL), and Glu113. The active-site N6-AMP-lysine intermediate is Lys115. Arg136, Glu173, Lys290, and Lys314 together coordinate NAD(+). Residues Cys408, Cys411, Cys426, and Cys432 each coordinate Zn(2+). The BRCT domain occupies 593–671 (EIDSPFAGKT…EAEMLRLLGS (79 aa)).

This sequence belongs to the NAD-dependent DNA ligase family. LigA subfamily. Mg(2+) serves as cofactor. Requires Mn(2+) as cofactor.

It catalyses the reaction NAD(+) + (deoxyribonucleotide)n-3'-hydroxyl + 5'-phospho-(deoxyribonucleotide)m = (deoxyribonucleotide)n+m + AMP + beta-nicotinamide D-nucleotide.. Its function is as follows. DNA ligase that catalyzes the formation of phosphodiester linkages between 5'-phosphoryl and 3'-hydroxyl groups in double-stranded DNA using NAD as a coenzyme and as the energy source for the reaction. It is essential for DNA replication and repair of damaged DNA. This chain is DNA ligase, found in Shigella boydii serotype 4 (strain Sb227).